The primary structure comprises 83 residues: RNA-binding protein Hfq (83 aa).

The region spanning 11-71 (DVFLNYIRKN…ISTIMPASPV (61 aa)) is the Sm domain.

The protein belongs to the Hfq family. In terms of assembly, homohexamer.

Its function is as follows. RNA chaperone that binds small regulatory RNA (sRNAs) and mRNAs to facilitate mRNA translational regulation in response to envelope stress, environmental stress and changes in metabolite concentrations. Also binds with high specificity to tRNAs. This Rhodospirillum rubrum (strain ATCC 11170 / ATH 1.1.1 / DSM 467 / LMG 4362 / NCIMB 8255 / S1) protein is RNA-binding protein Hfq.